We begin with the raw amino-acid sequence, 513 residues long: Zinc finger CCCH-type with G patch domain-containing protein (513 aa).

Position 1 is an N-acetylmethionine (methionine 1). The tract at residues 90–131 is disordered; sequence EVPVAPGAELETVPSRETGPGPTERGQEEDDGEDEEGGAALS. The segment covering 116 to 126 has biased composition (acidic residues); sequence QEEDDGEDEEG. The C3H1-type zinc-finger motif lies at 176 to 202; it reads KSLKPCSFFLEGKCRFQENCRFSHGQV. Positions 267–296 are disordered; it reads LPPLRTEPAGSSDSDGSDADDPSYARVVEP. 2 positions are modified to phosphoserine: serine 278 and serine 355. The G-patch domain maps to 315–361; sequence TRGIGSRLLAKMGYEFGKGLGRHAEGRVEPVHAVVLPRGKSLDQCAE. Disordered stretches follow at residues 367 to 394 and 492 to 513; these read TRAG…PPPR and AQEA…MTEF. A compositionally biased stretch (basic and acidic residues) spans 497-513; the sequence is LQREQRKADTHKKMTEF.

As to quaternary structure, interacts with CHD4/Mi-2; the interaction is direct.

It is found in the nucleus. Transcription repressor that specifically binds the 5'-GGAG[GA]A[GA]A-3' consensus sequence. Represses transcription by recruiting the chromatin multiprotein complex NuRD to target promoters. Negatively regulates expression of EGFR, a gene involved in cell proliferation, survival and migration. Its ability to repress genes of the EGFR pathway suggest it may act as a tumor suppressor. The protein is Zinc finger CCCH-type with G patch domain-containing protein (ZGPAT) of Bos taurus (Bovine).